A 235-amino-acid polypeptide reads, in one-letter code: uncharacterized protein (235 aa).

Disordered stretches follow at residues 60 to 96 (SSNR…QKKT) and 192 to 235 (LNTS…YDSF). The segment covering 80 to 93 (SFQNMNSSMPSSTQ) has biased composition (polar residues). A compositionally biased stretch (acidic residues) spans 197–214 (SEDDTESIVETDYSEEEK).

This sequence belongs to the asfivirus DP238L family.

This is an uncharacterized protein from Ornithodoros (relapsing fever ticks).